We begin with the raw amino-acid sequence, 366 residues long: MTFLQQANTGVQALSPYQAGKPIEELERELGISNIIKLASNENPFGFPESAKKAIQNQLDNLTRYPDSNGFSLKAAIAEKFNLQPEQITLGNGSNDLIELIAHTFATEGDEIIFSQYAFIVYPLITKAINAKAREIPAKNWGHDLEAFLAAINEKTKLIFIANPNNPTGNFLTEAEIDSFLAKVPPHIVVALDEAYTEFTAKEERVNSLALLKKYPNLVVSRSLSKAYGLAGLRIGFAVSNPEIAGLFNRVRQPFNVNSLALAAAEAVLNDDDFVEKAAENNRRELKRYEEFCQKYGLQYIPSKGNFITIDFQQPAAPVYDALLHEGVIVRPIAGYGMPNHLRISIGLPEENQRLFDALIKILNLK.

Position 226 is an N6-(pyridoxal phosphate)lysine (Lys226).

Belongs to the class-II pyridoxal-phosphate-dependent aminotransferase family. Histidinol-phosphate aminotransferase subfamily. As to quaternary structure, homodimer. It depends on pyridoxal 5'-phosphate as a cofactor.

The catalysed reaction is L-histidinol phosphate + 2-oxoglutarate = 3-(imidazol-4-yl)-2-oxopropyl phosphate + L-glutamate. Its pathway is amino-acid biosynthesis; L-histidine biosynthesis; L-histidine from 5-phospho-alpha-D-ribose 1-diphosphate: step 7/9. The chain is Histidinol-phosphate aminotransferase 1 from Mannheimia succiniciproducens (strain KCTC 0769BP / MBEL55E).